The primary structure comprises 175 residues: Transcription factor E (175 aa).

Residues 4–88 form the HTH TFE/IIEalpha-type domain; the sequence is AEDLFINLAK…YWKPNIDQIN (85 aa).

The protein belongs to the TFE family. Monomer. Interaction with RNA polymerase subunits RpoF and RpoE is necessary for Tfe stimulatory transcription activity. Able to interact with Tbp and RNA polymerase in the absence of DNA promoter. Interacts both with the preinitiation and elongation complexes.

Functionally, transcription factor that plays a role in the activation of archaeal genes transcribed by RNA polymerase. Facilitates transcription initiation by enhancing TATA-box recognition by TATA-box-binding protein (Tbp), and transcription factor B (Tfb) and RNA polymerase recruitment. Not absolutely required for transcription in vitro, but particularly important in cases where Tbp or Tfb function is not optimal. It dynamically alters the nucleic acid-binding properties of RNA polymerases by stabilizing the initiation complex and destabilizing elongation complexes. Seems to translocate with the RNA polymerase following initiation and acts by binding to the non template strand of the transcription bubble in elongation complexes. This is Transcription factor E from Saccharolobus islandicus (strain Y.N.15.51 / Yellowstone #2) (Sulfolobus islandicus).